Consider the following 355-residue polypeptide: Peptide chain release factor 1 (355 aa).

Position 231 is an N5-methylglutamine (Q231). Residues 280–291 (SERLAKESEARK) are compositionally biased toward basic and acidic residues. The disordered stretch occupies residues 280 to 303 (SERLAKESEARKSQVGSGDRSERI).

Belongs to the prokaryotic/mitochondrial release factor family. Post-translationally, methylated by PrmC. Methylation increases the termination efficiency of RF1.

Its subcellular location is the cytoplasm. In terms of biological role, peptide chain release factor 1 directs the termination of translation in response to the peptide chain termination codons UAG and UAA. In Campylobacter jejuni subsp. jejuni serotype O:2 (strain ATCC 700819 / NCTC 11168), this protein is Peptide chain release factor 1.